Reading from the N-terminus, the 204-residue chain is ATP phosphoribosyltransferase (204 aa).

Belongs to the ATP phosphoribosyltransferase family. Short subfamily. Heteromultimer composed of HisG and HisZ subunits.

It localises to the cytoplasm. The enzyme catalyses 1-(5-phospho-beta-D-ribosyl)-ATP + diphosphate = 5-phospho-alpha-D-ribose 1-diphosphate + ATP. It participates in amino-acid biosynthesis; L-histidine biosynthesis; L-histidine from 5-phospho-alpha-D-ribose 1-diphosphate: step 1/9. In terms of biological role, catalyzes the condensation of ATP and 5-phosphoribose 1-diphosphate to form N'-(5'-phosphoribosyl)-ATP (PR-ATP). Has a crucial role in the pathway because the rate of histidine biosynthesis seems to be controlled primarily by regulation of HisG enzymatic activity. This Campylobacter concisus (strain 13826) protein is ATP phosphoribosyltransferase.